The chain runs to 292 residues: Protease HtpX (292 aa).

A run of 2 helical transmembrane segments spans residues 5 to 25 (VVLFLLTNFAVLILAGIVMSV) and 34 to 54 (SGLLVMAAIFGFGGSFISLLL). H140 lines the Zn(2+) pocket. E141 is a catalytic residue. Zn(2+) is bound at residue H144. The next 2 helical transmembrane spans lie at 155-175 (LLQGVLNTFVIVLARVVGGII) and 193-213 (IIVFVLEMVFGLFATMIAMWF). E218 contacts Zn(2+).

Belongs to the peptidase M48B family. Zn(2+) serves as cofactor.

The protein localises to the cell inner membrane. The protein is Protease HtpX of Xanthomonas campestris pv. campestris (strain B100).